Here is a 159-residue protein sequence, read N- to C-terminus: Succinate dehydrogenase [ubiquinone] cytochrome b small subunit, mitochondrial (159 aa).

A mitochondrion-targeting transit peptide spans Met1–Lys30. Residues Ile31 to Arg65 are Mitochondrial matrix-facing. A helical transmembrane segment spans residues Ile66–Gly82. Over Thr83–Asp89 the chain is Mitochondrial intermembrane. A helical membrane pass occupies residues Ala90–Ile109. His99 is a binding site for heme. Over Asp110–Pro122 the chain is Mitochondrial matrix. Tyr111 contacts a ubiquinone. The helical transmembrane segment at Leu123–Tyr140 threads the bilayer. The Mitochondrial intermembrane portion of the chain corresponds to Glu141–Ser159.

This sequence belongs to the CybS family. Forms part of complex II containing four subunits: a flavoprotein (FP), an iron-sulfur protein (IP) and a cytochrome b composed of a large and a small subunit.

It is found in the mitochondrion inner membrane. The protein operates within carbohydrate metabolism; tricarboxylic acid cycle. Its function is as follows. Membrane-anchoring subunit of succinate dehydrogenase (SDH) that is involved in complex II of the mitochondrial electron transport chain and is responsible for transferring electrons from succinate to ubiquinone (coenzyme Q). This Schizosaccharomyces pombe (strain 972 / ATCC 24843) (Fission yeast) protein is Succinate dehydrogenase [ubiquinone] cytochrome b small subunit, mitochondrial (sdh4).